The chain runs to 260 residues: Phosphatidylglycerol--prolipoprotein diacylglyceryl transferase (260 aa).

Helical transmembrane passes span 16–36, 55–75, and 87–107; these read LEFR…YFIV, VIFS…ILFY, and LFAV…VILA. R138 serves as a coordination point for a 1,2-diacyl-sn-glycero-3-phospho-(1'-sn-glycerol). Transmembrane regions (helical) follow at residues 198-218 and 232-252; these read GVVF…VEFF and FSMG…MAVL.

This sequence belongs to the Lgt family.

The protein resides in the cell inner membrane. It carries out the reaction L-cysteinyl-[prolipoprotein] + a 1,2-diacyl-sn-glycero-3-phospho-(1'-sn-glycerol) = an S-1,2-diacyl-sn-glyceryl-L-cysteinyl-[prolipoprotein] + sn-glycerol 1-phosphate + H(+). It functions in the pathway protein modification; lipoprotein biosynthesis (diacylglyceryl transfer). Functionally, catalyzes the transfer of the diacylglyceryl group from phosphatidylglycerol to the sulfhydryl group of the N-terminal cysteine of a prolipoprotein, the first step in the formation of mature lipoproteins. The protein is Phosphatidylglycerol--prolipoprotein diacylglyceryl transferase of Geobacter sulfurreducens (strain ATCC 51573 / DSM 12127 / PCA).